The primary structure comprises 445 residues: Gastrula zinc finger protein 5-1 (445 aa).

A disordered region spans residues 1 to 38; sequence MLQIKTEKEELDCGDDQNPKESSAVPLTDGASPEPQPQ. Ser89 carries the post-translational modification Phosphoserine; by CK2. A C2H2-type 1; atypical zinc finger spans residues 185-210; the sequence is FICCKCGDSFAHHSDLHTHLYACAGH. 7 consecutive C2H2-type zinc fingers follow at residues 239–261, 267–289, 295–317, 323–345, 351–373, 379–401, and 407–429; these read FKCTVCGKCFTLKNSLQLHHRIH, FTCTECGKSFAQSCSLQLHSRTH, YVCTECGKRFSSNSGLRRHMRTH, YACKECGKFFSDLSTLHRHQNSH, FICTECGKGFTLKDSLHRHQRTH, FICSQCGKSYSQSSNLIKHQMIH, and FSCSECGKCFAVKDGLRNHQRVH.

In terms of biological role, binds to RNA homomers. In Xenopus laevis (African clawed frog), this protein is Gastrula zinc finger protein 5-1.